A 306-amino-acid chain; its full sequence is Homoserine kinase (306 aa).

84–94 (PAGLGLGSSGA) is an ATP binding site.

This sequence belongs to the GHMP kinase family. Homoserine kinase subfamily.

It is found in the cytoplasm. The enzyme catalyses L-homoserine + ATP = O-phospho-L-homoserine + ADP + H(+). The protein operates within amino-acid biosynthesis; L-threonine biosynthesis; L-threonine from L-aspartate: step 4/5. Its function is as follows. Catalyzes the ATP-dependent phosphorylation of L-homoserine to L-homoserine phosphate. The polypeptide is Homoserine kinase (Sulfurisphaera tokodaii (strain DSM 16993 / JCM 10545 / NBRC 100140 / 7) (Sulfolobus tokodaii)).